Reading from the N-terminus, the 173-residue chain is Transcription factor S-II-related protein (173 aa).

Residues 9–129 (ISDKEREIVI…EETLNQMATV (121 aa)) form the TFIIS central domain. The TFIIS-type zinc-finger motif lies at 130–170 (EWKPCYACKNTSYHFYQLQTRSADEPMTTFYICKNCMKTYK). Zn(2+) contacts are provided by C134, C137, C162, and C165.

Belongs to the TFS-II family.

In Acanthamoeba polyphaga mimivirus (APMV), this protein is Transcription factor S-II-related protein.